A 568-amino-acid chain; its full sequence is Urease subunit alpha (568 aa).

One can recognise a Urease domain in the interval 130–568; it reads GGIDTHIHFI…LPMAQRYFLF (439 aa). Histidine 135, histidine 137, and lysine 218 together coordinate Ni(2+). Residue lysine 218 is modified to N6-carboxylysine. Histidine 220 provides a ligand contact to substrate. 2 residues coordinate Ni(2+): histidine 247 and histidine 273. Catalysis depends on histidine 321, which acts as the Proton donor. Aspartate 361 is a Ni(2+) binding site.

Belongs to the metallo-dependent hydrolases superfamily. Urease alpha subunit family. Heterotrimer of UreA (gamma), UreB (beta) and UreC (alpha) subunits. Three heterotrimers associate to form the active enzyme. Requires Ni cation as cofactor. In terms of processing, carboxylation allows a single lysine to coordinate two nickel ions.

The protein localises to the cytoplasm. The enzyme catalyses urea + 2 H2O + H(+) = hydrogencarbonate + 2 NH4(+). The protein operates within nitrogen metabolism; urea degradation; CO(2) and NH(3) from urea (urease route): step 1/1. This is Urease subunit alpha from Burkholderia multivorans (strain ATCC 17616 / 249).